Consider the following 96-residue polypeptide: uncharacterized protein (96 aa).

The protein resides in the mitochondrion. This is an uncharacterized protein from Schizosaccharomyces pombe (strain 972 / ATCC 24843) (Fission yeast).